The primary structure comprises 283 residues: Nucleotide-binding protein Hore_15880 (283 aa).

8–15 (GMSGAGKS) is an ATP binding site. 57–60 (DIRG) contributes to the GTP binding site.

Belongs to the RapZ-like family.

Its function is as follows. Displays ATPase and GTPase activities. In Halothermothrix orenii (strain H 168 / OCM 544 / DSM 9562), this protein is Nucleotide-binding protein Hore_15880.